The primary structure comprises 393 residues: Phosphoglycerate kinase (393 aa).

Substrate-binding positions include 22 to 24 (DFN), arginine 37, 60 to 63 (HLGR), arginine 119, and arginine 152. ATP is bound by residues lysine 202, glycine 293, glutamate 324, and 350 to 353 (GGDS).

This sequence belongs to the phosphoglycerate kinase family. As to quaternary structure, monomer.

It localises to the cytoplasm. The enzyme catalyses (2R)-3-phosphoglycerate + ATP = (2R)-3-phospho-glyceroyl phosphate + ADP. Its pathway is carbohydrate degradation; glycolysis; pyruvate from D-glyceraldehyde 3-phosphate: step 2/5. This chain is Phosphoglycerate kinase (pgk), found in Borreliella burgdorferi (strain ATCC 35210 / DSM 4680 / CIP 102532 / B31) (Borrelia burgdorferi).